The sequence spans 164 residues: UPF0225 protein Shewana3_2159 (164 aa).

The protein belongs to the UPF0225 family.

The sequence is that of UPF0225 protein Shewana3_2159 from Shewanella sp. (strain ANA-3).